The following is a 139-amino-acid chain: uncharacterized protein (139 aa).

This is an uncharacterized protein from Sinorhizobium fredii (strain NBRC 101917 / NGR234).